Reading from the N-terminus, the 126-residue chain is Large ribosomal subunit protein bL12 (126 aa).

It belongs to the bacterial ribosomal protein bL12 family. As to quaternary structure, homodimer. Part of the ribosomal stalk of the 50S ribosomal subunit. Forms a multimeric L10(L12)X complex, where L10 forms an elongated spine to which 2 to 4 L12 dimers bind in a sequential fashion. Binds GTP-bound translation factors.

Functionally, forms part of the ribosomal stalk which helps the ribosome interact with GTP-bound translation factors. Is thus essential for accurate translation. This chain is Large ribosomal subunit protein bL12, found in Corynebacterium diphtheriae (strain ATCC 700971 / NCTC 13129 / Biotype gravis).